The primary structure comprises 1374 residues: Tripeptidyl-peptidase 2 (1374 aa).

The Peptidase S8 domain maps to Ala-62–Tyr-558. Catalysis depends on charge relay system residues Asp-93, His-314, and Ser-499.

This sequence belongs to the peptidase S8 family. Expressed in intestinal fat-storing cells and some head neurons.

The enzyme catalyses Release of an N-terminal tripeptide from a polypeptide.. Its function is as follows. Component of the proteolytic cascade acting downstream of the 26S proteasome in the ubiquitin-proteasome pathway. Has a role in regulation of fat storage. The protein is Tripeptidyl-peptidase 2 (tpp-2) of Caenorhabditis elegans.